Consider the following 293-residue polypeptide: 4-hydroxy-tetrahydrodipicolinate synthase (293 aa).

T45 contributes to the pyruvate binding site. Catalysis depends on Y133, which acts as the Proton donor/acceptor. The active-site Schiff-base intermediate with substrate is the K162. I204 serves as a coordination point for pyruvate.

It belongs to the DapA family. As to quaternary structure, homotetramer; dimer of dimers.

It is found in the cytoplasm. It carries out the reaction L-aspartate 4-semialdehyde + pyruvate = (2S,4S)-4-hydroxy-2,3,4,5-tetrahydrodipicolinate + H2O + H(+). Its pathway is amino-acid biosynthesis; L-lysine biosynthesis via DAP pathway; (S)-tetrahydrodipicolinate from L-aspartate: step 3/4. Functionally, catalyzes the condensation of (S)-aspartate-beta-semialdehyde [(S)-ASA] and pyruvate to 4-hydroxy-tetrahydrodipicolinate (HTPA). The polypeptide is 4-hydroxy-tetrahydrodipicolinate synthase (Chelativorans sp. (strain BNC1)).